Reading from the N-terminus, the 339-residue chain is Biotin synthase (339 aa).

The 228-residue stretch at 55–282 (NAVQLSTLLS…KAVVRLSAGR (228 aa)) folds into the Radical SAM core domain. Residues cysteine 70, cysteine 74, and cysteine 77 each contribute to the [4Fe-4S] cluster site. Residues cysteine 114, cysteine 145, cysteine 205, and arginine 277 each contribute to the [2Fe-2S] cluster site.

Belongs to the radical SAM superfamily. Biotin synthase family. Homodimer. It depends on [4Fe-4S] cluster as a cofactor. The cofactor is [2Fe-2S] cluster.

The enzyme catalyses (4R,5S)-dethiobiotin + (sulfur carrier)-SH + 2 reduced [2Fe-2S]-[ferredoxin] + 2 S-adenosyl-L-methionine = (sulfur carrier)-H + biotin + 2 5'-deoxyadenosine + 2 L-methionine + 2 oxidized [2Fe-2S]-[ferredoxin]. Its pathway is cofactor biosynthesis; biotin biosynthesis; biotin from 7,8-diaminononanoate: step 2/2. Its function is as follows. Catalyzes the conversion of dethiobiotin (DTB) to biotin by the insertion of a sulfur atom into dethiobiotin via a radical-based mechanism. In Burkholderia vietnamiensis (strain G4 / LMG 22486) (Burkholderia cepacia (strain R1808)), this protein is Biotin synthase.